The chain runs to 475 residues: Beta-amyrin 6-beta-monooxygenase (475 aa).

The chain crosses the membrane as a helical span at residues 6–22 (LYSLAFALVYISLYFIF). C423 lines the heme pocket.

Belongs to the cytochrome P450 family. It depends on heme as a cofactor. Specifically expressed in roots.

Its subcellular location is the membrane. The enzyme catalyses beta-amyrin + reduced [NADPH--hemoprotein reductase] + O2 = daturadiol + oxidized [NADPH--hemoprotein reductase] + H2O + H(+). Functionally, catalyzes the C-6 beta-hydroxylation of beta-amyrin to form daturadiol. Catalyzes the C-6 beta-hydroxylation of alpha-amyrin to form 6-beta-hydroxy-alpha-amyrin. This Solanum lycopersicum (Tomato) protein is Beta-amyrin 6-beta-monooxygenase.